The sequence spans 284 residues: MKRLPAVAGSFYESDPKKLKMQIEWSFRHNIGPRDIPKQTYEKKKRDNLFFVVPHAGYIYSGPVAAHSYYYLVSEGRPDVVIILGPNHTGLGSYVSAWPKGEWETPLGSVKIDEEILMQLVKESEVIDLDEKSHLYEHSIEVQLPFLQHFFDDDFKIVPIVIMMQTPEIAEFLADAIYNVMQKNPDKDIVVLASSDMNHYDPHEITVKKDVEAIEKIQQLDYKGLYEVVEGKDVTLCGYGPIMVNLILAKKFGKKAYILKHATSGDTSGPKDSVVGYLAARFGS.

This sequence belongs to the MEMO1 family.

In Saccharolobus islandicus (strain Y.G.57.14 / Yellowstone #1) (Sulfolobus islandicus), this protein is MEMO1 family protein YG5714_2180.